A 93-amino-acid chain; its full sequence is FMRFamide-like neuropeptides 22 (93 aa).

The first 19 residues, 1 to 19, serve as a signal peptide directing secretion; that stretch reads MNRSMIALCVVLMVSLVSA. Residues 20–46 constitute a propeptide that is removed on maturation; the sequence is QVFDLDGQQLAGLEQNDARLMEQQVKR. 3 positions are modified to phenylalanine amide: Phe-55, Phe-67, and Phe-79. Positions 83–93 are excised as a propeptide; that stretch reads SGAEAVSEQDY.

The protein belongs to the FARP (FMRFamide related peptide) family.

It is found in the secreted. Functionally, FMRFamides and FMRFamide-like peptides are neuropeptides. Its function is as follows. SPSAKWMRF-amide: Acts as a ligand for the npr-22 receptor in vitro. In Caenorhabditis elegans, this protein is FMRFamide-like neuropeptides 22.